Consider the following 326-residue polypeptide: Interleukin-1-binding protein (326 aa).

The signal sequence occupies residues 1–18 (MSIPPVIFLPIFFYSSFV). Ig-like C2-type domains follow at residues 24–115 (PECI…LNLT), 122–208 (SNID…YDVT), and 221–322 (PPTM…KTVT). The cysteines at positions 48 and 99 are disulfide-linked. 3 N-linked (GlcNAc...) asparagine; by host glycosylation sites follow: Asn-80, Asn-103, and Asn-113. Cys-143 and Cys-194 are oxidised to a cystine. Asn-237 is a glycosylation site (N-linked (GlcNAc...) asparagine; by host). Cys-242 and Cys-309 form a disulfide bridge.

This sequence belongs to the interleukin-1 receptor family. As to quaternary structure, interacts with mouse Il1b.

The protein localises to the secreted. Functionally, may reduce the host inflammatory response by interacting with inteleukin-1 beta (Il1b) and thus decreasing the association between IL1B and its cellular receptor. The chain is Interleukin-1-binding protein (OPG201) from Bos taurus (Bovine).